The following is a 191-amino-acid chain: Elongation factor P-like protein (191 aa).

The protein belongs to the elongation factor P family.

This Shewanella sediminis (strain HAW-EB3) protein is Elongation factor P-like protein.